The sequence spans 473 residues: Anthocyanidin 5,3-O-glucosyltransferase (473 aa).

Belongs to the UDP-glycosyltransferase family.

It participates in pigment biosynthesis; anthocyanin biosynthesis. Functionally, sequentially catalyzes two glycosylation steps at the 5-OH and 3-OH positions of anthocyanidin. Unglycosylated anthocyanidin or anthocyanidin 5-O-glucoside, but not anthocyanidin 3-O-glucoside, can be used as glucosyl acceptor. The protein is Anthocyanidin 5,3-O-glucosyltransferase (RhGT1) of Rosa hybrid cultivar.